The chain runs to 409 residues: Putative competence-damage inducible protein (409 aa).

The protein belongs to the CinA family.

This chain is Putative competence-damage inducible protein, found in Clostridium botulinum (strain Loch Maree / Type A3).